The sequence spans 89 residues: Signal recognition particle 19 kDa protein (89 aa).

This sequence belongs to the SRP19 family. Part of the signal recognition particle protein translocation system, which is composed of SRP and FtsY. Archaeal SRP consists of a 7S RNA molecule of 300 nucleotides and two protein subunits: SRP54 and SRP19.

It localises to the cytoplasm. Its function is as follows. Involved in targeting and insertion of nascent membrane proteins into the cytoplasmic membrane. Binds directly to 7S RNA and mediates binding of the 54 kDa subunit of the SRP. This Methanococcus maripaludis (strain C7 / ATCC BAA-1331) protein is Signal recognition particle 19 kDa protein.